The sequence spans 72 residues: Cold shock-like protein CspD (72 aa).

The region spanning glycine 4 to isoleucine 64 is the CSD domain.

Its subcellular location is the cytoplasm. In Haemophilus influenzae (strain ATCC 51907 / DSM 11121 / KW20 / Rd), this protein is Cold shock-like protein CspD (cspD).